Here is a 398-residue protein sequence, read N- to C-terminus: Acetylornithine aminotransferase (398 aa).

Pyridoxal 5'-phosphate contacts are provided by residues 105-106 and F138; that span reads GA. Residue R141 coordinates N(2)-acetyl-L-ornithine. 223–226 serves as a coordination point for pyridoxal 5'-phosphate; it reads DEVQ. K252 bears the N6-(pyridoxal phosphate)lysine mark. N(2)-acetyl-L-ornithine is bound at residue T280. Position 281 (T281) interacts with pyridoxal 5'-phosphate.

Belongs to the class-III pyridoxal-phosphate-dependent aminotransferase family. ArgD subfamily. Homodimer. Pyridoxal 5'-phosphate is required as a cofactor.

Its subcellular location is the cytoplasm. The enzyme catalyses N(2)-acetyl-L-ornithine + 2-oxoglutarate = N-acetyl-L-glutamate 5-semialdehyde + L-glutamate. The protein operates within amino-acid biosynthesis; L-arginine biosynthesis; N(2)-acetyl-L-ornithine from L-glutamate: step 4/4. The protein is Acetylornithine aminotransferase of Methanocaldococcus jannaschii (strain ATCC 43067 / DSM 2661 / JAL-1 / JCM 10045 / NBRC 100440) (Methanococcus jannaschii).